Reading from the N-terminus, the 212-residue chain is Translation initiation factor IF-3 (212 aa).

A disordered region spans residues 168-212; the sequence is MAPKAPASPKKDKADRPEGDAGDTDMAAPAPAPAAAPETESAPSA. Positions 176-186 are enriched in basic and acidic residues; the sequence is PKKDKADRPEG. The span at 194–212 shows a compositional bias: low complexity; it reads AAPAPAPAAAPETESAPSA.

This sequence belongs to the IF-3 family. Monomer.

It localises to the cytoplasm. IF-3 binds to the 30S ribosomal subunit and shifts the equilibrium between 70S ribosomes and their 50S and 30S subunits in favor of the free subunits, thus enhancing the availability of 30S subunits on which protein synthesis initiation begins. This is Translation initiation factor IF-3 from Deinococcus radiodurans (strain ATCC 13939 / DSM 20539 / JCM 16871 / CCUG 27074 / LMG 4051 / NBRC 15346 / NCIMB 9279 / VKM B-1422 / R1).